We begin with the raw amino-acid sequence, 536 residues long: Phosphoenolpyruvate carboxykinase (ATP) (536 aa).

Positions 61, 195, and 201 each coordinate substrate. Residues lysine 201, histidine 220, and 236 to 244 contribute to the ATP site; that span reads GLSGTGKTT. Residues lysine 201 and histidine 220 each coordinate Mn(2+). Aspartate 257 contacts Mn(2+). Positions 285, 322, and 447 each coordinate ATP. Substrate is bound at residue arginine 322.

Belongs to the phosphoenolpyruvate carboxykinase (ATP) family. Requires Mn(2+) as cofactor.

Its subcellular location is the cytoplasm. The catalysed reaction is oxaloacetate + ATP = phosphoenolpyruvate + ADP + CO2. The protein operates within carbohydrate biosynthesis; gluconeogenesis. In terms of biological role, involved in the gluconeogenesis. Catalyzes the conversion of oxaloacetate (OAA) to phosphoenolpyruvate (PEP) through direct phosphoryl transfer between the nucleoside triphosphate and OAA. This chain is Phosphoenolpyruvate carboxykinase (ATP), found in Rhizobium johnstonii (strain DSM 114642 / LMG 32736 / 3841) (Rhizobium leguminosarum bv. viciae).